Here is a 325-residue protein sequence, read N- to C-terminus: Glutarate 2-hydroxylase (325 aa).

Fe cation contacts are provided by H160, D162, and H292.

The protein belongs to the glutarate hydroxylase family. In terms of assembly, homotetramer. The cofactor is Fe(2+).

It catalyses the reaction glutarate + 2-oxoglutarate + O2 = (S)-2-hydroxyglutarate + succinate + CO2. It functions in the pathway amino-acid degradation. Its function is as follows. Acts as an alpha-ketoglutarate-dependent dioxygenase catalyzing hydroxylation of glutarate (GA) to L-2-hydroxyglutarate (L2HG). Functions in a L-lysine degradation pathway that proceeds via cadaverine, glutarate and L-2-hydroxyglutarate. The polypeptide is Glutarate 2-hydroxylase (Escherichia coli (strain 55989 / EAEC)).